The primary structure comprises 137 residues: Ribosome-binding factor A (137 aa).

This sequence belongs to the RbfA family. Monomer. Binds 30S ribosomal subunits, but not 50S ribosomal subunits or 70S ribosomes.

It is found in the cytoplasm. Its function is as follows. One of several proteins that assist in the late maturation steps of the functional core of the 30S ribosomal subunit. Associates with free 30S ribosomal subunits (but not with 30S subunits that are part of 70S ribosomes or polysomes). Required for efficient processing of 16S rRNA. May interact with the 5'-terminal helix region of 16S rRNA. This chain is Ribosome-binding factor A, found in Rhodopseudomonas palustris (strain TIE-1).